The primary structure comprises 411 residues: Epoxyqueuosine reductase (411 aa).

D171 functions as the Proton donor in the catalytic mechanism. The 33-residue stretch at 213–245 folds into the 4Fe-4S ferredoxin-type domain; the sequence is LPLPVDKPQEEQCGRCVACMTTCPTGAIVAPYT. 8 residues coordinate [4Fe-4S] cluster: C225, C228, C231, C235, C251, C278, C281, and C285.

Belongs to the QueG family. In terms of assembly, monomer. It depends on cob(II)alamin as a cofactor. The cofactor is [4Fe-4S] cluster.

The protein localises to the cytoplasm. It catalyses the reaction epoxyqueuosine(34) in tRNA + AH2 = queuosine(34) in tRNA + A + H2O. It functions in the pathway tRNA modification; tRNA-queuosine biosynthesis. In terms of biological role, catalyzes the conversion of epoxyqueuosine (oQ) to queuosine (Q), which is a hypermodified base found in the wobble positions of tRNA(Asp), tRNA(Asn), tRNA(His) and tRNA(Tyr). The polypeptide is Epoxyqueuosine reductase (Yersinia pestis).